We begin with the raw amino-acid sequence, 226 residues long: Exopolysaccharide production protein ExoY (226 aa).

Residues 34-54 (VLIAILALIALSPLFLLVMGL) traverse the membrane as a helical segment.

It belongs to the bacterial sugar transferase family.

The protein resides in the cell membrane. It participates in glycan metabolism; exopolysaccharide biosynthesis. In terms of biological role, needed for the addition of the first sugar (galactose) to the isoprenoid carrier. May function as a sugar transferase. In Sinorhizobium fredii (strain NBRC 101917 / NGR234), this protein is Exopolysaccharide production protein ExoY (exoY).